Here is a 296-residue protein sequence, read N- to C-terminus: 4-hydroxy-tetrahydrodipicolinate synthase (296 aa).

Pyruvate is bound at residue Thr49. The active-site Proton donor/acceptor is the Tyr137. The active-site Schiff-base intermediate with substrate is the Lys166. Position 208 (Ile208) interacts with pyruvate.

The protein belongs to the DapA family. In terms of assembly, homotetramer; dimer of dimers.

The protein resides in the cytoplasm. It carries out the reaction L-aspartate 4-semialdehyde + pyruvate = (2S,4S)-4-hydroxy-2,3,4,5-tetrahydrodipicolinate + H2O + H(+). Its pathway is amino-acid biosynthesis; L-lysine biosynthesis via DAP pathway; (S)-tetrahydrodipicolinate from L-aspartate: step 3/4. Catalyzes the condensation of (S)-aspartate-beta-semialdehyde [(S)-ASA] and pyruvate to 4-hydroxy-tetrahydrodipicolinate (HTPA). This Chlorobium phaeobacteroides (strain DSM 266 / SMG 266 / 2430) protein is 4-hydroxy-tetrahydrodipicolinate synthase.